Reading from the N-terminus, the 302-residue chain is Aspartate carbamoyltransferase catalytic subunit (302 aa).

Positions 53 and 54 each coordinate carbamoyl phosphate. Residue K82 participates in L-aspartate binding. The carbamoyl phosphate site is built by R103, H131, and Q134. L-aspartate-binding residues include R164 and R223. Positions 260 and 261 each coordinate carbamoyl phosphate.

Belongs to the aspartate/ornithine carbamoyltransferase superfamily. ATCase family. In terms of assembly, heterooligomer of catalytic and regulatory chains.

It catalyses the reaction carbamoyl phosphate + L-aspartate = N-carbamoyl-L-aspartate + phosphate + H(+). The protein operates within pyrimidine metabolism; UMP biosynthesis via de novo pathway; (S)-dihydroorotate from bicarbonate: step 2/3. In terms of biological role, catalyzes the condensation of carbamoyl phosphate and aspartate to form carbamoyl aspartate and inorganic phosphate, the committed step in the de novo pyrimidine nucleotide biosynthesis pathway. The protein is Aspartate carbamoyltransferase catalytic subunit of Methanococcus maripaludis (strain C5 / ATCC BAA-1333).